Reading from the N-terminus, the 209-residue chain is Large ribosomal subunit protein uL3 (209 aa).

A disordered region spans residues 126-148; that stretch reads HGQSRGPMAHGSRYHRRPGSMGP.

Belongs to the universal ribosomal protein uL3 family. Part of the 50S ribosomal subunit. Forms a cluster with proteins L14 and L19.

Its function is as follows. One of the primary rRNA binding proteins, it binds directly near the 3'-end of the 23S rRNA, where it nucleates assembly of the 50S subunit. This is Large ribosomal subunit protein uL3 from Listeria monocytogenes serotype 4b (strain CLIP80459).